The following is a 324-amino-acid chain: Cytosolic sulfotransferase 13 (324 aa).

76 to 81 (KSGTTW) contacts 3'-phosphoadenylyl sulfate. Histidine 134 functions as the Proton acceptor in the catalytic mechanism. Residues arginine 156, serine 164, tyrosine 222, and 288–290 (RKG) contribute to the 3'-phosphoadenylyl sulfate site.

This sequence belongs to the sulfotransferase 1 family.

It localises to the cytoplasm. Functionally, sulfotransferase that utilizes 3'-phospho-5'-adenylyl sulfate (PAPS) as sulfonate donor. The chain is Cytosolic sulfotransferase 13 (SOT13) from Arabidopsis thaliana (Mouse-ear cress).